The primary structure comprises 100 residues: Aspartyl/glutamyl-tRNA(Asn/Gln) amidotransferase subunit C (100 aa).

Belongs to the GatC family. As to quaternary structure, heterotrimer of A, B and C subunits.

It catalyses the reaction L-glutamyl-tRNA(Gln) + L-glutamine + ATP + H2O = L-glutaminyl-tRNA(Gln) + L-glutamate + ADP + phosphate + H(+). It carries out the reaction L-aspartyl-tRNA(Asn) + L-glutamine + ATP + H2O = L-asparaginyl-tRNA(Asn) + L-glutamate + ADP + phosphate + 2 H(+). In terms of biological role, allows the formation of correctly charged Asn-tRNA(Asn) or Gln-tRNA(Gln) through the transamidation of misacylated Asp-tRNA(Asn) or Glu-tRNA(Gln) in organisms which lack either or both of asparaginyl-tRNA or glutaminyl-tRNA synthetases. The reaction takes place in the presence of glutamine and ATP through an activated phospho-Asp-tRNA(Asn) or phospho-Glu-tRNA(Gln). This chain is Aspartyl/glutamyl-tRNA(Asn/Gln) amidotransferase subunit C, found in Dictyoglomus turgidum (strain DSM 6724 / Z-1310).